Reading from the N-terminus, the 171-residue chain is Adenine phosphoribosyltransferase (171 aa).

This sequence belongs to the purine/pyrimidine phosphoribosyltransferase family. In terms of assembly, homodimer.

Its subcellular location is the cytoplasm. It catalyses the reaction AMP + diphosphate = 5-phospho-alpha-D-ribose 1-diphosphate + adenine. Its pathway is purine metabolism; AMP biosynthesis via salvage pathway; AMP from adenine: step 1/1. Catalyzes a salvage reaction resulting in the formation of AMP, that is energically less costly than de novo synthesis. This is Adenine phosphoribosyltransferase from Gloeobacter violaceus (strain ATCC 29082 / PCC 7421).